Reading from the N-terminus, the 1399-residue chain is DNA-directed RNA polymerase subunit beta' (1399 aa).

Cys-70, Cys-72, Cys-85, and Cys-88 together coordinate Zn(2+). The Mg(2+) site is built by Asp-460, Asp-462, and Asp-464. Positions 814, 888, 895, and 898 each coordinate Zn(2+).

Belongs to the RNA polymerase beta' chain family. In terms of assembly, the RNAP catalytic core consists of 2 alpha, 1 beta, 1 beta' and 1 omega subunit. When a sigma factor is associated with the core the holoenzyme is formed, which can initiate transcription. Requires Mg(2+) as cofactor. The cofactor is Zn(2+).

It carries out the reaction RNA(n) + a ribonucleoside 5'-triphosphate = RNA(n+1) + diphosphate. Its function is as follows. DNA-dependent RNA polymerase catalyzes the transcription of DNA into RNA using the four ribonucleoside triphosphates as substrates. This is DNA-directed RNA polymerase subunit beta' from Ectopseudomonas mendocina (strain ymp) (Pseudomonas mendocina).